The primary structure comprises 156 residues: Crossover junction endodeoxyribonuclease RuvC (156 aa).

Active-site residues include aspartate 9, glutamate 69, and aspartate 141. Mg(2+) is bound by residues aspartate 9, glutamate 69, and aspartate 141.

Belongs to the RuvC family. As to quaternary structure, homodimer which binds Holliday junction (HJ) DNA. The HJ becomes 2-fold symmetrical on binding to RuvC with unstacked arms; it has a different conformation from HJ DNA in complex with RuvA. In the full resolvosome a probable DNA-RuvA(4)-RuvB(12)-RuvC(2) complex forms which resolves the HJ. Mg(2+) serves as cofactor.

Its subcellular location is the cytoplasm. It catalyses the reaction Endonucleolytic cleavage at a junction such as a reciprocal single-stranded crossover between two homologous DNA duplexes (Holliday junction).. Its function is as follows. The RuvA-RuvB-RuvC complex processes Holliday junction (HJ) DNA during genetic recombination and DNA repair. Endonuclease that resolves HJ intermediates. Cleaves cruciform DNA by making single-stranded nicks across the HJ at symmetrical positions within the homologous arms, yielding a 5'-phosphate and a 3'-hydroxyl group; requires a central core of homology in the junction. The consensus cleavage sequence is 5'-(A/T)TT(C/G)-3'. Cleavage occurs on the 3'-side of the TT dinucleotide at the point of strand exchange. HJ branch migration catalyzed by RuvA-RuvB allows RuvC to scan DNA until it finds its consensus sequence, where it cleaves and resolves the cruciform DNA. The chain is Crossover junction endodeoxyribonuclease RuvC from Acaryochloris marina (strain MBIC 11017).